A 498-amino-acid polypeptide reads, in one-letter code: ATP synthase subunit beta, chloroplastic (498 aa).

An ATP-binding site is contributed by 172–179 (GGAGVGKT).

This sequence belongs to the ATPase alpha/beta chains family. As to quaternary structure, F-type ATPases have 2 components, CF(1) - the catalytic core - and CF(0) - the membrane proton channel. CF(1) has five subunits: alpha(3), beta(3), gamma(1), delta(1), epsilon(1). CF(0) has four main subunits: a(1), b(1), b'(1) and c(9-12).

It localises to the plastid. Its subcellular location is the chloroplast thylakoid membrane. It catalyses the reaction ATP + H2O + 4 H(+)(in) = ADP + phosphate + 5 H(+)(out). Produces ATP from ADP in the presence of a proton gradient across the membrane. The catalytic sites are hosted primarily by the beta subunits. This Daucus carota (Wild carrot) protein is ATP synthase subunit beta, chloroplastic.